A 149-amino-acid chain; its full sequence is Nucleoside diphosphate kinase (149 aa).

The ATP site is built by Lys-9, Phe-57, Arg-85, Thr-91, Arg-102, and Asn-112. His-115 functions as the Pros-phosphohistidine intermediate in the catalytic mechanism.

This sequence belongs to the NDK family. In terms of assembly, homotetramer. Mg(2+) serves as cofactor.

It localises to the cytoplasm. It carries out the reaction a 2'-deoxyribonucleoside 5'-diphosphate + ATP = a 2'-deoxyribonucleoside 5'-triphosphate + ADP. The enzyme catalyses a ribonucleoside 5'-diphosphate + ATP = a ribonucleoside 5'-triphosphate + ADP. In terms of biological role, major role in the synthesis of nucleoside triphosphates other than ATP. The ATP gamma phosphate is transferred to the NDP beta phosphate via a ping-pong mechanism, using a phosphorylated active-site intermediate. This chain is Nucleoside diphosphate kinase, found in Carboxydothermus hydrogenoformans (strain ATCC BAA-161 / DSM 6008 / Z-2901).